Reading from the N-terminus, the 110-residue chain is Iron-sulfur cluster assembly protein CyaY (110 aa).

The protein belongs to the frataxin family.

In terms of biological role, involved in iron-sulfur (Fe-S) cluster assembly. May act as a regulator of Fe-S biogenesis. This chain is Iron-sulfur cluster assembly protein CyaY, found in Stutzerimonas stutzeri (strain A1501) (Pseudomonas stutzeri).